We begin with the raw amino-acid sequence, 531 residues long: Acetate CoA-transferase YdiF (531 aa).

E333 functions as the 5-glutamyl coenzyme A thioester intermediate in the catalytic mechanism.

Belongs to the 3-oxoacid CoA-transferase family. Homotetramer; dimer of dimers.

The catalysed reaction is an acyl-CoA + acetate = a carboxylate + acetyl-CoA. In terms of biological role, coA transferase having broad substrate specificity for short-chain acyl-CoA thioesters with the activity decreasing when the length of the carboxylic acid chain exceeds four carbons. Exhibits high activity with acetoacetyl-CoA, propionyl-CoA, crotonoyl-CoA or butyryl-CoA as donors, with acetate as an acceptor. When acetyl-CoA is used as the donor, propionate, acetoacetate, butyrate, isobutyrate, and 4-hydroxybutyrate can be utilized as acceptors but not isovalerate. May play a role in short-chain fatty acid metabolism in E.coli. The sequence is that of Acetate CoA-transferase YdiF from Escherichia coli O157:H7.